A 136-amino-acid chain; its full sequence is Large ribosomal subunit protein eL27A (136 aa).

Belongs to the eukaryotic ribosomal protein eL27 family. As to quaternary structure, component of the large ribosomal subunit (LSU). Mature yeast ribosomes consist of a small (40S) and a large (60S) subunit. The 40S small subunit contains 1 molecule of ribosomal RNA (18S rRNA) and at least 33 different proteins. The large 60S subunit contains 3 rRNA molecules (25S, 5.8S and 5S rRNA) and at least 46 different proteins.

It is found in the cytoplasm. The protein resides in the nucleus. Component of the ribosome, a large ribonucleoprotein complex responsible for the synthesis of proteins in the cell. The small ribosomal subunit (SSU) binds messenger RNAs (mRNAs) and translates the encoded message by selecting cognate aminoacyl-transfer RNA (tRNA) molecules. The large subunit (LSU) contains the ribosomal catalytic site termed the peptidyl transferase center (PTC), which catalyzes the formation of peptide bonds, thereby polymerizing the amino acids delivered by tRNAs into a polypeptide chain. The nascent polypeptides leave the ribosome through a tunnel in the LSU and interact with protein factors that function in enzymatic processing, targeting, and the membrane insertion of nascent chains at the exit of the ribosomal tunnel. The chain is Large ribosomal subunit protein eL27A (rpl2701) from Schizosaccharomyces pombe (strain 972 / ATCC 24843) (Fission yeast).